The chain runs to 80 residues: Myrmicitoxin(1)-Pr1a (80 aa).

Positions 1 to 23 (MEIPKLLYIAVIAIGLSGSLTWA) are cleaved as a signal peptide. A propeptide spanning residues 24-57 (TPLANPLAEAEAEAKATAEATAEALAEALAEPEP) is cleaved from the precursor. Phe-79 is modified (phenylalanine amide).

It belongs to the formicidae venom clade 1 family. Expressed by the venom gland.

It is found in the secreted. Vertebrate-selective toxin that causes pain by targeting voltage-gated sodium channels. In Pogonomyrmex rugosus (Desert harvester ant), this protein is Myrmicitoxin(1)-Pr1a.